A 95-amino-acid chain; its full sequence is Sec-independent protein translocase protein TatA (95 aa).

A helical transmembrane segment spans residues 1–21 (MFGRLGAPEIILILVVIILLF). Over residues 44 to 55 (AKAMKSEAKADD) the composition is skewed to basic and acidic residues. Positions 44–95 (AKAMKSEAKADDAAPADPPNPEQSAAQRTIQAAPGDVTSSRPVTEPTDTTKR) are disordered.

It belongs to the TatA/E family. As to quaternary structure, the Tat system comprises two distinct complexes: a TatABC complex, containing multiple copies of TatA, TatB and TatC subunits, and a separate TatA complex, containing only TatA subunits. Substrates initially bind to the TatABC complex, which probably triggers association of the separate TatA complex to form the active translocon.

The protein localises to the cell membrane. Its function is as follows. Part of the twin-arginine translocation (Tat) system that transports large folded proteins containing a characteristic twin-arginine motif in their signal peptide across membranes. TatA could form the protein-conducting channel of the Tat system. This is Sec-independent protein translocase protein TatA from Streptomyces coelicolor (strain ATCC BAA-471 / A3(2) / M145).